The chain runs to 194 residues: dCTP deaminase (194 aa).

Residues 110–115 (RSSLAR), D128, 136–138 (VLE), Y171, K178, and Q182 each bind dCTP. The active-site Proton donor/acceptor is E138. Residues 175-194 (KDAKYKNQQSAVSSRINQDD) form a disordered region. Over residues 180-194 (KNQQSAVSSRINQDD) the composition is skewed to polar residues.

Belongs to the dCTP deaminase family. Homotrimer.

It catalyses the reaction dCTP + H2O + H(+) = dUTP + NH4(+). The protein operates within pyrimidine metabolism; dUMP biosynthesis; dUMP from dCTP (dUTP route): step 1/2. Functionally, catalyzes the deamination of dCTP to dUTP. The protein is dCTP deaminase of Actinobacillus pleuropneumoniae serotype 5b (strain L20).